The chain runs to 513 residues: Activin receptor type-2A (513 aa).

Positions 1 to 19 (MGAATKLAFAVFLISCSSG) are cleaved as a signal peptide. Residues 20 to 139 (AILGRSETQE…VTPKPPLFNT (120 aa)) lie on the Extracellular side of the membrane. 5 cysteine pairs are disulfide-bonded: C30–C60, C50–C78, C85–C104, C91–C103, and C105–C110. N43 and N66 each carry an N-linked (GlcNAc...) asparagine glycan. The helical transmembrane segment at 140-160 (LLYSLVPIMGIAVIVLFSFWM) threads the bilayer. Residues 161–513 (YRHHKLAYPP…VDFPPKESSL (353 aa)) lie on the Cytoplasmic side of the membrane. The region spanning 192 to 485 (LQLLEIKARG…EERIIQMQKL (294 aa)) is the Protein kinase domain. ATP contacts are provided by residues 198 to 206 (KARGRFGCV) and K219. Residue D322 is the Proton acceptor of the active site.

It belongs to the protein kinase superfamily. TKL Ser/Thr protein kinase family. TGFB receptor subfamily. Mg(2+) is required as a cofactor. Requires Mn(2+) as cofactor. As to expression, expressed in hen anterior pituitary during the ovulatory cycle and in the ovarian follicle.

The protein localises to the cell membrane. It carries out the reaction L-threonyl-[receptor-protein] + ATP = O-phospho-L-threonyl-[receptor-protein] + ADP + H(+). The enzyme catalyses L-seryl-[receptor-protein] + ATP = O-phospho-L-seryl-[receptor-protein] + ADP + H(+). On ligand binding, forms a receptor complex consisting of two type II and two type I transmembrane serine/threonine kinases. Type II receptors phosphorylate and activate type I receptors which autophosphorylate, then bind and activate SMAD transcriptional regulators. Receptor for activin A, activin B and inhibin A. May modulate neuropeptide expression in dorsal root ganglia (DRG) neurons and ovarian follicle development. This Gallus gallus (Chicken) protein is Activin receptor type-2A (ACVR2A).